Reading from the N-terminus, the 554-residue chain is Solute carrier family 22 member 22 (554 aa).

At 1–15 the chain is on the cytoplasmic side; sequence MDFDEILHHVGDSGR. The helical transmembrane segment at 16-36 threads the bilayer; it reads FQICMIILLNILSLVLSPHDV. Topologically, residues 37–144 are extracellular; sequence LENFTAAIPA…DLVCDFQSFK (108 aa). N-linked (GlcNAc...) asparagine glycosylation is present at Asn39. The helical transmembrane segment at 145–165 threads the bilayer; it reads YYAQATSLAGHLVSCPLSGII. Residues 166–172 lie on the Cytoplasmic side of the membrane; sequence SDRFGRK. Residues 173–193 traverse the membrane as a helical segment; sequence PLLMYCSLAYGAVGTYCAFAP. N-linked (GlcNAc...) asparagine glycosylation is present at Asn194. Residues 194 to 199 are Extracellular-facing; the sequence is NFSVYC. Residues 200-220 traverse the membrane as a helical segment; it reads VLRFLLSAFQSTILINSLILV. The Cytoplasmic portion of the chain corresponds to 221–231; it reads LEEASVQWHPT. Residues 232-252 form a helical membrane-spanning segment; it reads IIVLSGLFNSIGQGVLGGLAY. Residues 253 to 258 lie on the Extracellular side of the membrane; sequence VISDWH. A helical transmembrane segment spans residues 259–279; sequence LLQLAYALPFFIFFVLFCWVP. Residues 280–347 are Cytoplasmic-facing; that stretch reads ESVRWLIITG…DIFINPLIRK (68 aa). Residues 348–368 traverse the membrane as a helical segment; that stretch reads IVLSNSSLLFAELFSFVGLLL. Residues 369-376 are Extracellular-facing; sequence DVQLLGKN. A helical transmembrane segment spans residues 377 to 397; sequence MFLTQIFLGAIDVPSKSLTYF. Over 398–405 the chain is Cytoplasmic; that stretch reads TIRNVSRR. The helical transmembrane segment at 406–426 threads the bilayer; it reads PLIAFLLLTTGSCITITIFIS. The Extracellular portion of the chain corresponds to 427–434; that stretch reads EEMYVLRT. Residues 435–455 traverse the membrane as a helical segment; the sequence is IIFILGKGCFAAFTCISTTYI. The Cytoplasmic portion of the chain corresponds to 456–466; that stretch reads NELSPVELRST. Residues 467–487 form a helical membrane-spanning segment; that stretch reads LNGVFLAVVRLAGVLSALTLA. At 488–491 the chain is on the extracellular side; that stretch reads TRKY. Residues 492-512 form a helical membrane-spanning segment; sequence FVYLPMILYGVLPIVATISIL. Residues 513 to 554 are Cytoplasmic-facing; it reads FLPETFNLPHTDIIKDMEKRKRLMSKNISKKEGQDFLETTEC.

Belongs to the major facilitator (TC 2.A.1) superfamily. Organic cation transporter (TC 2.A.1.19) family. In terms of tissue distribution, specifically expressed in kidney where it is found in proximal convoluted tubules (at protein level). Colocalizes with the prostaglandin-inactivating enzyme HPGD in kidney (at protein level). Not detected in other tissues tested.

It is found in the basolateral cell membrane. In terms of biological role, sodium-independent organic anion transporter which exhibits high specificity for a subset of prostaglandins including prostaglandin E2 (PGE2), prostaglandin E1 (PGE1), prostaglandin F2-alpha (PGF2-alpha) and prostaglandin D2 (PGD2). The protein is Solute carrier family 22 member 22 of Mus musculus (Mouse).